A 248-amino-acid chain; its full sequence is Small ribosomal subunit protein eS6 (248 aa).

The interval 215–248 is disordered; sequence VQRKKESKAKREEAKRRRSASIRESKSSVSSDKK. A compositionally biased stretch (basic and acidic residues) spans 223-248; sequence AKREEAKRRRSASIRESKSSVSSDKK. Phosphoserine occurs at positions 233, 235, 239, 242, 244, and 245.

This sequence belongs to the eukaryotic ribosomal protein eS6 family. As to quaternary structure, component of the small ribosomal subunit. Part of the small subunit (SSU) processome, composed of more than 70 proteins and the RNA chaperone small nucleolar RNA (snoRNA) U3. In terms of processing, ribosomal protein S6 is the major substrate of protein kinases in eukaryote ribosomes. The phosphorylation is stimulated by growth factors, tumor promoting agents, and mitogens. It is dephosphorylated at growth arrest.

It localises to the cytoplasm. It is found in the nucleus. Its subcellular location is the nucleolus. In terms of biological role, component of the 40S small ribosomal subunit. Plays an important role in controlling cell growth and proliferation through the selective translation of particular classes of mRNA. Part of the small subunit (SSU) processome, first precursor of the small eukaryotic ribosomal subunit. During the assembly of the SSU processome in the nucleolus, many ribosome biogenesis factors, an RNA chaperone and ribosomal proteins associate with the nascent pre-rRNA and work in concert to generate RNA folding, modifications, rearrangements and cleavage as well as targeted degradation of pre-ribosomal RNA by the RNA exosome. The chain is Small ribosomal subunit protein eS6 (RpS6) from Drosophila melanogaster (Fruit fly).